A 104-amino-acid chain; its full sequence is L-rhamnose mutarotase (104 aa).

Residue Y18 coordinates substrate. The active-site Proton donor is the H22. Residues Y41 and 76–77 contribute to the substrate site; that span reads WW.

This sequence belongs to the rhamnose mutarotase family. As to quaternary structure, homodimer.

The protein localises to the cytoplasm. The catalysed reaction is alpha-L-rhamnose = beta-L-rhamnose. It functions in the pathway carbohydrate metabolism; L-rhamnose metabolism. Functionally, involved in the anomeric conversion of L-rhamnose. In Listeria monocytogenes serotype 4b (strain F2365), this protein is L-rhamnose mutarotase.